A 426-amino-acid polypeptide reads, in one-letter code: MFTEDMRIADYDPELSAAINAEKRRQEEHIELIASENYVSPRVMEAQGGVLTNKYAEGYPGKRYYGGCEHVDVAEQLAIDRAKQLFGADYANVQPHSGSQANAGVYLALAKPGDTILGMSLDHGGHLTHGAKPNFSGKIFNAVQYGLNPETGEIDYDQVERLAKEHKPKLVIAGFSAYSRVVDWQRFRDIADSVGAYLIVDMAHVAGLVAAGLYPSPVQIADVTTTTTHKTLRGPRGGLILAKSNPEIEKKLQSLIFPGIQGGPLMHVIAAKAVAFKEALEPAFRDYQQQVVNNARAMADAVKARGYKVVSGGTDNHLFLIDLIDKGVTGKDADAALGRAYITVNKNTVPNDPQSPFVTSGLRIGTPGVTTRGFKEKEVVELANWICDVLDNMGDESVVEKVREKVLSICRDFPVYRANAKSGAAL.

(6S)-5,6,7,8-tetrahydrofolate contacts are provided by residues L121 and 125 to 127; that span reads GHL. An N6-(pyridoxal phosphate)lysine modification is found at K230. Position 355–357 (355–357) interacts with (6S)-5,6,7,8-tetrahydrofolate; that stretch reads SPF.

This sequence belongs to the SHMT family. In terms of assembly, homodimer. Pyridoxal 5'-phosphate is required as a cofactor.

The protein resides in the cytoplasm. The enzyme catalyses (6R)-5,10-methylene-5,6,7,8-tetrahydrofolate + glycine + H2O = (6S)-5,6,7,8-tetrahydrofolate + L-serine. Its pathway is one-carbon metabolism; tetrahydrofolate interconversion. The protein operates within amino-acid biosynthesis; glycine biosynthesis; glycine from L-serine: step 1/1. Its function is as follows. Catalyzes the reversible interconversion of serine and glycine with tetrahydrofolate (THF) serving as the one-carbon carrier. This reaction serves as the major source of one-carbon groups required for the biosynthesis of purines, thymidylate, methionine, and other important biomolecules. Also exhibits THF-independent aldolase activity toward beta-hydroxyamino acids, producing glycine and aldehydes, via a retro-aldol mechanism. The chain is Serine hydroxymethyltransferase 1 from Hahella chejuensis (strain KCTC 2396).